The following is a 1467-amino-acid chain: Actin cytoskeleton-regulatory complex protein pan1 (1467 aa).

Positions 1–157 are disordered; that stretch reads MYSSSNSFLG…PPPKSSGSKI (157 aa). Over residues 25–48 the composition is skewed to low complexity; it reads QPPYSQLPQGQQQIPQQTGFQPQP. The span at 50–75 shows a compositional bias: polar residues; it reads GYGSQSASHLQPQPTGFPTGQLQPQF. Residues 77-101 show a composition bias toward low complexity; that stretch reads GFPGAAPPQQQQQFGGYQAPAQQPQ. The segment covering 129–139 has biased composition (polar residues); it reads RTSSEIANSFS. In terms of domain architecture, EH 1 spans 169–257; it reads DQAKFEQLFK…DKIKNEVSGM (89 aa). The region spanning 201 to 236 is the EF-hand 1 domain; sequence LPGSELSKIWVLSDTTKSGQLFFPEFALAMYLCNLR. The segment at 266 to 376 is disordered; sequence PDTEPQGAAR…PQATGYNGPR (111 aa). The span at 292-301 shows a compositional bias: pro residues; sequence PPAPQHPKPQ. Composition is skewed to polar residues over residues 305 to 314 and 340 to 370; these read NAQFLSQLAA and LAPQTTGFPGQSQQQYLHSQPTGLMTNPQAT. The 90-residue stretch at 458–547 folds into the EH 2 domain; sequence EKKIYDDLFR…PELIPPSTRN (90 aa). The EF-hand 2 domain occupies 491–526; it reads LDRKDLERIWTLADPNNRGRLNMDEFAVAMHLIYRK. 4 disordered regions span residues 613–643, 822–864, 888–1087, and 1101–1467; these read AGYRSSARRRVGNDARPSSPPTSQASEEELS, RADR…HERR, RTAH…ELLK, and EQVR…RVLD. Residues 634 to 758 are a coiled coil; it reads TSQASEEELS…LFRLKDAKAH (125 aa). Over residues 892-912 the composition is skewed to basic and acidic residues; that stretch reads IRKEEESRASAQEQRLRHEEP. Positions 919–934 are enriched in low complexity; sequence LSPAPSAGSAGSLPGS. 5 stretches are compositionally biased toward basic and acidic residues: residues 935–953, 973–1009, 1054–1087, 1101–1129, and 1136–1153; these read THEDRVAAARERAQRRIAE, RQEREKREREERLRRAEEEDAKREQERQRRLAEEQRS, AAREQAIREEQQAQEEETNRLEMEAQKREEELLK, EQVRQGKIRKQEEKRRKEEAERLAKEKEA, and AEIERAKERERQLQLELE. Residues 965-1162 adopt a coiled-coil conformation; sequence DTSETLLQRQ…ERLDEESSSD (198 aa). Acidic residues predominate over residues 1154–1165; sequence RLDEESSSDDEG. A compositionally biased stretch (polar residues) spans 1171 to 1182; that stretch reads PEDSTPTQSQLL. The span at 1183 to 1197 shows a compositional bias: low complexity; it reads PTVTPAAPVSAPESE. Residues 1279–1288 are compositionally biased toward basic and acidic residues; the sequence is LERKSRARPE. Pro residues-rich tracts occupy residues 1369–1381 and 1389–1430; these read AAPPPPPPPPPAA and VAPP…PTPA. Residues 1434-1451 form the WH2 domain; it reads DRSALLASIQKGKGLRKV.

The protein belongs to the PAN1 family. In terms of assembly, component of the PAN1 actin cytoskeleton-regulatory complex.

It is found in the cell membrane. The protein localises to the endosome membrane. The protein resides in the cytoplasm. It localises to the cytoskeleton. Its subcellular location is the actin patch. Its function is as follows. Component of the PAN1 actin cytoskeleton-regulatory complex required for the internalization of endosomes during actin-coupled endocytosis. The complex links the site of endocytosis to the cell membrane-associated actin cytoskeleton. Mediates uptake of external molecules and vacuolar degradation of plasma membrane proteins. Plays a role in the proper organization of the cell membrane-associated actin cytoskeleton and promotes its destabilization. The sequence is that of Actin cytoskeleton-regulatory complex protein pan1 (pan1) from Aspergillus fumigatus (strain CBS 144.89 / FGSC A1163 / CEA10) (Neosartorya fumigata).